Here is a 203-residue protein sequence, read N- to C-terminus: Small ribosomal subunit protein uS4 (203 aa).

In terms of domain architecture, S4 RNA-binding spans 93–154 (RRFDNVVYRC…KSRNLDAVAD (62 aa)).

Belongs to the universal ribosomal protein uS4 family. As to quaternary structure, part of the 30S ribosomal subunit. Contacts protein S5. The interaction surface between S4 and S5 is involved in control of translational fidelity.

Functionally, one of the primary rRNA binding proteins, it binds directly to 16S rRNA where it nucleates assembly of the body of the 30S subunit. Its function is as follows. With S5 and S12 plays an important role in translational accuracy. The chain is Small ribosomal subunit protein uS4 from Chlorobaculum parvum (strain DSM 263 / NCIMB 8327) (Chlorobium vibrioforme subsp. thiosulfatophilum).